The primary structure comprises 143 residues: SGTCTIETCWMRLPTFRSVGEFLKDRFDGASRVALRNEGVRGNSNRGDRGDRRDRGDRSDNGGTEANFQPYNSNHKPPGPRDLVYFDDSPDFCVRNERAGTLGTVGRECNNTSLGVDGCDLMCCGRDYDGSEVRIKERCSCTF.

The O-palmitoleoyl serine; by PORCN moiety is linked to residue S1. Residues 38 to 81 form a disordered region; the sequence is EGVRGNSNRGDRGDRRDRGDRSDNGGTEANFQPYNSNHKPPGPR. Residues 46 to 60 show a composition bias toward basic and acidic residues; the sequence is RGDRGDRRDRGDRSD. Polar residues predominate over residues 64-75; the sequence is TEANFQPYNSNH. C109 and C124 are oxidised to a cystine. N110 and N111 each carry an N-linked (GlcNAc...) asparagine glycan.

Belongs to the Wnt family. In terms of processing, palmitoleoylation is required for efficient binding to frizzled receptors. Palmitoleoylation is necessary for proper trafficking to cell surface. Depalmitoleoylated by NOTUM, leading to inhibit Wnt signaling pathway.

The protein resides in the secreted. The protein localises to the extracellular space. Its subcellular location is the extracellular matrix. Its function is as follows. Ligand for members of the frizzled family of seven transmembrane receptors. Probable developmental protein. The polypeptide is Protein Wnt-1 (WNT-1) (Evasterias troschelii (Mottled sea star)).